A 266-amino-acid polypeptide reads, in one-letter code: Coiled-coil domain-containing glutamate-rich protein 2 (266 aa).

Residues 1–23 (MPPRGPASELLLLRLLLLGAATA) form the signal peptide. Composition is skewed to basic and acidic residues over residues 90–100 (EAGKMRSSQEV), 154–188 (LWQR…EKGV), 204–213 (GGGERREDLP), and 221–266 (QPEA…RREG). Positions 90–266 (EAGKMRSSQE…TLGEQLRREG (177 aa)) are disordered.

Expressed at higher levels in fetal brain and skeletal muscle. Lower expression is detected in fetal kidney, liver, spleen, thymus, heart and lung.

The protein localises to the secreted. The protein is Coiled-coil domain-containing glutamate-rich protein 2 (CCER2) of Homo sapiens (Human).